The primary structure comprises 322 residues: uncharacterized protein (322 aa).

It belongs to the glycosyltransferase 2 family.

This is an uncharacterized protein from Nostoc sp. (strain PCC 7120 / SAG 25.82 / UTEX 2576).